We begin with the raw amino-acid sequence, 100 residues long: Integration host factor subunit alpha (100 aa).

This sequence belongs to the bacterial histone-like protein family. Heterodimer of an alpha and a beta chain.

This protein is one of the two subunits of integration host factor, a specific DNA-binding protein that functions in genetic recombination as well as in transcriptional and translational control. The chain is Integration host factor subunit alpha from Jannaschia sp. (strain CCS1).